The chain runs to 85 residues: Small ribosomal subunit protein eS21 (85 aa).

Belongs to the eukaryotic ribosomal protein eS21 family. As to quaternary structure, component of the 40S small ribosomal subunit.

Its subcellular location is the cytoplasm. The protein localises to the cytosol. It localises to the rough endoplasmic reticulum. The sequence is that of Small ribosomal subunit protein eS21 (rps-21) from Pectinaria gouldii (Trumpet worm).